The chain runs to 1677 residues: Pentafunctional AROM polypeptide (1677 aa).

A 3-dehydroquinate synthase region spans residues 1 to 394 (MAVADDTKAD…YEQKASIVED (394 aa)). NAD(+)-binding positions include 50-52 (DDN), 89-92 (ETSK), 120-122 (GGV), and Asp-125. Arg-136 contributes to the 7-phospho-2-dehydro-3-deoxy-D-arabino-heptonate binding site. 145 to 146 (TT) contributes to the NAD(+) binding site. 2 residues coordinate 7-phospho-2-dehydro-3-deoxy-D-arabino-heptonate: Asp-152 and Lys-158. Lys-167 provides a ligand contact to NAD(+). Position 168 (Asn-168) interacts with 7-phospho-2-dehydro-3-deoxy-D-arabino-heptonate. NAD(+) contacts are provided by residues 185–188 (YLET) and Asn-196. Glu-200 provides a ligand contact to Zn(2+). Residues 200 to 203 (EVVK) and Lys-260 contribute to the 7-phospho-2-dehydro-3-deoxy-D-arabino-heptonate site. The active-site Proton acceptor; for 3-dehydroquinate synthase activity is the Glu-270. 7-phospho-2-dehydro-3-deoxy-D-arabino-heptonate-binding positions include 274 to 278 (RNLVN) and His-281. Position 281 (His-281) interacts with Zn(2+). His-285 acts as the Proton acceptor; for 3-dehydroquinate synthase activity in catalysis. Positions 297 and 366 each coordinate 7-phospho-2-dehydro-3-deoxy-D-arabino-heptonate. His-297 lines the Zn(2+) pocket. The interval 407–858 (VVPSIPTGNV…WDDLENKIGI (452 aa)) is EPSP synthase. Cys-840 (for EPSP synthase activity) is an active-site residue. A shikimate kinase region spans residues 885-1113 (NSSILLIGMR…GQQRRTYFLC (229 aa)). 892-899 (GMRGTGKT) provides a ligand contact to ATP. The segment at 1114–1341 (LTYPDVRHAF…AAPGQLSFKQ (228 aa)) is 3-dehydroquinase. His-1243 functions as the Proton acceptor; for 3-dehydroquinate dehydratase activity in the catalytic mechanism. Lys-1271 acts as the Schiff-base intermediate with substrate; for 3-dehydroquinate dehydratase activity in catalysis. Residues 1354-1677 (SKHFHLFGTP…TRVWEKYGEV (324 aa)) are shikimate dehydrogenase.

This sequence in the N-terminal section; belongs to the sugar phosphate cyclases superfamily. Dehydroquinate synthase family. The protein in the 2nd section; belongs to the EPSP synthase family. It in the 3rd section; belongs to the shikimate kinase family. In the 4th section; belongs to the type-I 3-dehydroquinase family. This sequence in the C-terminal section; belongs to the shikimate dehydrogenase family. As to quaternary structure, homodimer. Requires Zn(2+) as cofactor.

Its subcellular location is the cytoplasm. It catalyses the reaction 7-phospho-2-dehydro-3-deoxy-D-arabino-heptonate = 3-dehydroquinate + phosphate. The catalysed reaction is 3-dehydroquinate = 3-dehydroshikimate + H2O. The enzyme catalyses shikimate + NADP(+) = 3-dehydroshikimate + NADPH + H(+). It carries out the reaction shikimate + ATP = 3-phosphoshikimate + ADP + H(+). It catalyses the reaction 3-phosphoshikimate + phosphoenolpyruvate = 5-O-(1-carboxyvinyl)-3-phosphoshikimate + phosphate. It functions in the pathway metabolic intermediate biosynthesis; chorismate biosynthesis; chorismate from D-erythrose 4-phosphate and phosphoenolpyruvate: step 2/7. Its pathway is metabolic intermediate biosynthesis; chorismate biosynthesis; chorismate from D-erythrose 4-phosphate and phosphoenolpyruvate: step 3/7. The protein operates within metabolic intermediate biosynthesis; chorismate biosynthesis; chorismate from D-erythrose 4-phosphate and phosphoenolpyruvate: step 4/7. It participates in metabolic intermediate biosynthesis; chorismate biosynthesis; chorismate from D-erythrose 4-phosphate and phosphoenolpyruvate: step 5/7. It functions in the pathway metabolic intermediate biosynthesis; chorismate biosynthesis; chorismate from D-erythrose 4-phosphate and phosphoenolpyruvate: step 6/7. The AROM polypeptide catalyzes 5 consecutive enzymatic reactions in prechorismate polyaromatic amino acid biosynthesis. This chain is Pentafunctional AROM polypeptide, found in Coprinopsis cinerea (strain Okayama-7 / 130 / ATCC MYA-4618 / FGSC 9003) (Inky cap fungus).